A 30-amino-acid polypeptide reads, in one-letter code: Small toxic protein BsrE (30 aa).

The chain crosses the membrane as a helical span at residues 4-24 (FQALMLMLAIGSFIIALLTYI).

It is found in the cell membrane. Toxic component of a type I toxin-antitoxin (TA) system; overexpression in the absence of cognate antisense antitoxin SR5 RNA leads to cell lysis. Base pairing occurs between the 3' UTRs of bsrE mRNA and SR5 RNA which leads to bsrE mRNA degradation initiated by RNase III (rnc) and RNase J1 (rnjA). Genetic evidence suggests an unidentified RNA-binding protein may exist that promotes TA RNA interaction. The sequence is that of Small toxic protein BsrE from Bacillus subtilis (strain 168).